A 279-amino-acid polypeptide reads, in one-letter code: Movement protein (279 aa).

It belongs to the cucumovirus movement protein family.

It is found in the host cell junction. Its subcellular location is the host plasmodesma. Transports viral genome to neighboring plant cells directly through plasmosdesmata, without any budding. The movement protein allows efficient cell to cell propagation, by bypassing the host cell wall barrier. Acts by forming a tubular structure at the host plasmodesmata, enlarging it enough to allow free passage of virion capsids. This is Movement protein from Cucumber mosaic virus (strain C7-2) (CMV).